The primary structure comprises 925 residues: Probable disease resistance protein At1g61310 (925 aa).

Residues 25–69 adopt a coiled-coil conformation; that stretch reads GKSYIRTLEKNLRALQREMEDLRATQHEVQNKVAREESRHQQRLE. Positions 134–154 are disordered; that stretch reads NFDEVSQPPPRSEVEERPTQP. The NB-ARC domain occupies 139–442; the sequence is SQPPPRSEVE…CEGFIGEDQV (304 aa). Residue 181–188 participates in ATP binding; it reads GMGGVGKT. LRR repeat units lie at residues 525-546, 547-568, 571-594, 595-617, 618-640, and 641-663; these read AVRR…SKCS, ELTT…FIRY, KLVV…SGLV, SLQY…KELK, KLTF…SRLL, and SLRV…KELQ.

The protein belongs to the disease resistance NB-LRR family.

Its function is as follows. Probable disease resistance protein. In Arabidopsis thaliana (Mouse-ear cress), this protein is Probable disease resistance protein At1g61310.